Here is a 160-residue protein sequence, read N- to C-terminus: Bcl-2-like gene 16 protein (160 aa).

Positions 64-84 match the BH1 motif; the sequence is LLTTEHTTNWGKVVAMLSFSA.

The protein belongs to the Bcl-2 family.

In Saimiri sciureus (Common squirrel monkey), this protein is Bcl-2-like gene 16 protein (16).